A 204-amino-acid chain; its full sequence is UPF0056 membrane protein TC_0241 (204 aa).

6 helical membrane-spanning segments follow: residues 8–28, 46–66, 68–88, 107–127, 138–158, and 176–196; these read LTLL…FVAL, IFAL…FRLL, VSLP…AINM, IFYP…STLG, LVLG…FFSS, and FGIS…STAF.

The protein belongs to the UPF0056 (MarC) family.

It localises to the cell membrane. The polypeptide is UPF0056 membrane protein TC_0241 (Chlamydia muridarum (strain MoPn / Nigg)).